The following is a 166-amino-acid chain: Crossover junction endodeoxyribonuclease RuvC (166 aa).

Residues Asp9, Glu70, and Asp144 contribute to the active site. Residues Asp9, Glu70, and Asp144 each contribute to the Mg(2+) site.

Belongs to the RuvC family. In terms of assembly, homodimer which binds Holliday junction (HJ) DNA. The HJ becomes 2-fold symmetrical on binding to RuvC with unstacked arms; it has a different conformation from HJ DNA in complex with RuvA. In the full resolvosome a probable DNA-RuvA(4)-RuvB(12)-RuvC(2) complex forms which resolves the HJ. Mg(2+) is required as a cofactor.

It localises to the cytoplasm. It catalyses the reaction Endonucleolytic cleavage at a junction such as a reciprocal single-stranded crossover between two homologous DNA duplexes (Holliday junction).. In terms of biological role, the RuvA-RuvB-RuvC complex processes Holliday junction (HJ) DNA during genetic recombination and DNA repair. Endonuclease that resolves HJ intermediates. Cleaves cruciform DNA by making single-stranded nicks across the HJ at symmetrical positions within the homologous arms, yielding a 5'-phosphate and a 3'-hydroxyl group; requires a central core of homology in the junction. The consensus cleavage sequence is 5'-(A/T)TT(C/G)-3'. Cleavage occurs on the 3'-side of the TT dinucleotide at the point of strand exchange. HJ branch migration catalyzed by RuvA-RuvB allows RuvC to scan DNA until it finds its consensus sequence, where it cleaves and resolves the cruciform DNA. This is Crossover junction endodeoxyribonuclease RuvC from Neorickettsia sennetsu (strain ATCC VR-367 / Miyayama) (Ehrlichia sennetsu).